A 217-amino-acid polypeptide reads, in one-letter code: Histone H1C (217 aa).

2 stretches are compositionally biased toward low complexity: residues 1–11 and 28–45; these read MAETASTETTP and KKAA…PSAS. Disordered regions lie at residues 1–45 and 123–217; these read MAET…PSAS and VAKK…AAKK. In terms of domain architecture, H15 spans 40–113; that stretch reads SGPSASELIV…GASGSFKLNK (74 aa). Basic residues-rich tracts occupy residues 123-151 and 159-217; these read VAKK…KPKK and SPKK…AAKK.

It belongs to the histone H1/H5 family.

The protein localises to the nucleus. Its subcellular location is the chromosome. Its function is as follows. Histones H1 are necessary for the condensation of nucleosome chains into higher-order structures. This chain is Histone H1C, found in Xenopus laevis (African clawed frog).